Consider the following 68-residue polypeptide: DNA-directed RNA polymerase subunit omega (68 aa).

This sequence belongs to the RNA polymerase subunit omega family. In terms of assembly, the RNAP catalytic core consists of 2 alpha, 1 beta, 1 beta' and 1 omega subunit. When a sigma factor is associated with the core the holoenzyme is formed, which can initiate transcription.

The enzyme catalyses RNA(n) + a ribonucleoside 5'-triphosphate = RNA(n+1) + diphosphate. Its function is as follows. Promotes RNA polymerase assembly. Latches the N- and C-terminal regions of the beta' subunit thereby facilitating its interaction with the beta and alpha subunits. This is DNA-directed RNA polymerase subunit omega from Neisseria gonorrhoeae (strain NCCP11945).